Here is a 96-residue protein sequence, read N- to C-terminus: Co-chaperonin GroES (96 aa).

The protein belongs to the GroES chaperonin family. In terms of assembly, heptamer of 7 subunits arranged in a ring. Interacts with the chaperonin GroEL.

It localises to the cytoplasm. Its function is as follows. Together with the chaperonin GroEL, plays an essential role in assisting protein folding. The GroEL-GroES system forms a nano-cage that allows encapsulation of the non-native substrate proteins and provides a physical environment optimized to promote and accelerate protein folding. GroES binds to the apical surface of the GroEL ring, thereby capping the opening of the GroEL channel. The protein is Co-chaperonin GroES of Leptothrix cholodnii (strain ATCC 51168 / LMG 8142 / SP-6) (Leptothrix discophora (strain SP-6)).